The primary structure comprises 68 residues: Beta-defensin 1 (68 aa).

An N-terminal signal peptide occupies residues 1–21 (MRTSYLLLFTLCLLLSEIASG). The propeptide occupies 22–32 (GNFLTGLGHRS). Cystine bridges form between cysteine 37-cysteine 66, cysteine 44-cysteine 59, and cysteine 49-cysteine 67.

It belongs to the beta-defensin family. Monomer. Homodimer.

The protein resides in the secreted. Its subcellular location is the membrane. Functionally, has bactericidal activity. May act as a ligand for C-C chemokine receptor CCR6. Positively regulates the sperm motility and bactericidal activity in a CCR6-dependent manner. Binds to CCR6 and triggers Ca2+ mobilization in the sperm which is important for its motility. The chain is Beta-defensin 1 (DEFB1) from Gorilla gorilla gorilla (Western lowland gorilla).